We begin with the raw amino-acid sequence, 141 residues long: Transcription antitermination protein NusB (141 aa).

Belongs to the NusB family.

In terms of biological role, involved in transcription antitermination. Required for transcription of ribosomal RNA (rRNA) genes. Binds specifically to the boxA antiterminator sequence of the ribosomal RNA (rrn) operons. The chain is Transcription antitermination protein NusB from Neisseria meningitidis serogroup B (strain ATCC BAA-335 / MC58).